Consider the following 441-residue polypeptide: Probable D-serine dehydratase (441 aa).

Lysine 115 carries the N6-(pyridoxal phosphate)lysine modification.

It belongs to the serine/threonine dehydratase family. DsdA subfamily. Requires pyridoxal 5'-phosphate as cofactor.

It carries out the reaction D-serine = pyruvate + NH4(+). The sequence is that of Probable D-serine dehydratase from Fusobacterium nucleatum subsp. nucleatum (strain ATCC 25586 / DSM 15643 / BCRC 10681 / CIP 101130 / JCM 8532 / KCTC 2640 / LMG 13131 / VPI 4355).